The chain runs to 243 residues: Large ribosomal subunit protein uL3 (243 aa).

2 disordered regions span residues 139 to 164 (VSHRSIGSTGGRQDPGKTFKNKKMPG) and 218 to 243 (KPGKFKLADGGDKAAAAPEATAGEGA). Gln151 carries the post-translational modification N5-methylglutamine. Positions 218–229 (KPGKFKLADGGD) are enriched in basic and acidic residues. Residues 230–243 (KAAAAPEATAGEGA) show a composition bias toward low complexity.

The protein belongs to the universal ribosomal protein uL3 family. In terms of assembly, part of the 50S ribosomal subunit. Forms a cluster with proteins L14 and L19. Methylated by PrmB.

In terms of biological role, one of the primary rRNA binding proteins, it binds directly near the 3'-end of the 23S rRNA, where it nucleates assembly of the 50S subunit. This is Large ribosomal subunit protein uL3 from Afipia carboxidovorans (strain ATCC 49405 / DSM 1227 / KCTC 32145 / OM5) (Oligotropha carboxidovorans).